The sequence spans 425 residues: Gamma-glutamyl phosphate reductase (425 aa).

This sequence belongs to the gamma-glutamyl phosphate reductase family.

The protein resides in the cytoplasm. It catalyses the reaction L-glutamate 5-semialdehyde + phosphate + NADP(+) = L-glutamyl 5-phosphate + NADPH + H(+). The protein operates within amino-acid biosynthesis; L-proline biosynthesis; L-glutamate 5-semialdehyde from L-glutamate: step 2/2. Its function is as follows. Catalyzes the NADPH-dependent reduction of L-glutamate 5-phosphate into L-glutamate 5-semialdehyde and phosphate. The product spontaneously undergoes cyclization to form 1-pyrroline-5-carboxylate. This is Gamma-glutamyl phosphate reductase from Xylella fastidiosa (strain M23).